The sequence spans 549 residues: MSYTDNPPQTKRALSLDDLVNHDENEKVKLQKLSEAANGSRPFAENLESDINQTETGQAAPIDNYKESTGHGSHSQKPKSRKSSNDDEETDTDDEMGASGEINFDSEMDFDYDKQHRNLLSNGSPPMNDGSDANAKLEKPSDDSIHQNSKSDEEQRIPKQGNEGNIASNYITQVPLQKQKQTEKKIAGNAVGSVVKKEEEANAAVDNIFEEKATLQSKKNNIKRDLEVLNEISASSKPSKYRNVPIWAQKWKPTIKALQSINVKDLKIDPSFLNIIPDDDLTKSVQDWVYATIYSIAPELRSFIELEMKFGVIIDAKGPDRVNPPVSSQCVFTELDAHLTPNIDASLFKELSKYIRGISEVTENTGKFSIIESQTRDSVYRVGLSTQRPRFLRMSTDIKTGRVGQFIEKRHVAQLLLYSPKDSYDVKISLNLELPVPDNDPPEKYKSQSPISERTKDRVSYIHNDSCTRIDITKVENHNQNSKSRQSETTHEVELEINTPALLNAFDNITNDSKEYASLIRTFLNNGTIIRRKLSSLSYEIFEGSKKVM.

Position 2 is an N-acetylserine (serine 2). Phosphoserine is present on serine 15. The interval 30–169 (LQKLSEAANG…QGNEGNIASN (140 aa)) is disordered. Over residues 86 to 96 (DDEETDTDDEM) the composition is skewed to acidic residues. Serine 124 carries the phosphoserine modification. Residues 135 to 157 (AKLEKPSDDSIHQNSKSDEEQRI) show a composition bias toward basic and acidic residues. Lysine 223 functions as the N6-GMP-lysine intermediate in the catalytic mechanism.

It belongs to the fungal TPase family. Heterodimer. The mRNA-capping enzyme is composed of two separate chains alpha and beta, respectively a mRNA guanylyltransferase and an mRNA 5'-triphosphate monophosphatase. Mg(2+) is required as a cofactor.

It localises to the nucleus. It carries out the reaction a 5'-end triphospho-ribonucleoside in mRNA + H2O = a 5'-end diphospho-ribonucleoside in mRNA + phosphate + H(+). First step of mRNA capping. Converts the 5'-triphosphate end of a nascent mRNA chain into a diphosphate end. This is mRNA-capping enzyme subunit beta (CET1) from Saccharomyces cerevisiae (strain ATCC 204508 / S288c) (Baker's yeast).